Reading from the N-terminus, the 318-residue chain is Cytosolic Fe-S cluster assembly factor Nubp1 homolog (318 aa).

The segment covering 1–15 (MSAPEVENKPADAPE) has biased composition (basic and acidic residues). The interval 1 to 29 (MSAPEVENKPADAPEHCPGTESENAGKAS) is disordered. Residues cysteine 17, cysteine 31, cysteine 34, and cysteine 40 each coordinate [4Fe-4S] cluster. Residue 70–77 (GKGGVGKS) coordinates ATP. [4Fe-4S] cluster contacts are provided by cysteine 245 and cysteine 248.

This sequence belongs to the Mrp/NBP35 ATP-binding proteins family. NUBP1/NBP35 subfamily. In terms of assembly, heterotetramer of 2 Nubp1 and 2 Nubp2 chains. Requires [4Fe-4S] cluster as cofactor.

The protein localises to the cytoplasm. Its function is as follows. Component of the cytosolic iron-sulfur (Fe/S) protein assembly (CIA) machinery. Required for maturation of extramitochondrial Fe-S proteins. The Nubp1-Nubp2 heterotetramer forms a Fe-S scaffold complex, mediating the de novo assembly of an Fe-S cluster and its transfer to target apoproteins. In Aedes aegypti (Yellowfever mosquito), this protein is Cytosolic Fe-S cluster assembly factor Nubp1 homolog.